The sequence spans 243 residues: Protein GIGAS CELL1 (243 aa).

In terms of assembly, interacts with APC/C activators such as FZR1, FZR2, FZR3, CDC20.1 and CDC20.5. Phosphorylated by CDKA-1 in complex with CYCA1-2. As to expression, expressed in rapidly dividing tissues such as shoot apical meristem and young leaves. Associated with cell division but also with specific cell types.

Functionally, negative regulator of the anaphase-promoting complex/cyclosome (APC/C) ubiquitin ligase required for proper mitotic and meiotic progression and cell fate determination. Involved in entry into both meiosis I and meiosis II. Prevents endomitosis by preferentially inhibiting APC/C(CDC20). Required for megagametophyte and endosperm development. Triggers mitotic cyclins (e.g. CYCB1-1 and CYCB1-2) accumulation. Confers immunity to bacterial pathogens (e.g. Pseudomonas syringae pv. tomato DC3000), which is associated with increased expression of disease resistance (R) genes. GIG1 and PANS1 are part of a network linking centromere cohesion and cell cycle progression through control of APC/C activity. This Arabidopsis thaliana (Mouse-ear cress) protein is Protein GIGAS CELL1 (GIG1).